The sequence spans 475 residues: Sensor histidine kinase QseE (475 aa).

Topologically, residues 1–13 (MKRWPVFPRSLRQ) are cytoplasmic. The helical transmembrane segment at 14-34 (LVMLAFLLILLPLLVLAWQAW) threads the bilayer. Residues 35 to 173 (QSLNALSDQA…LQREIAERGQ (139 aa)) lie on the Periplasmic side of the membrane. The helical transmembrane segment at 174–194 (YFGWQSLVLFLVSLVMVLLFT) threads the bilayer. Topologically, residues 195–475 (RMIIGPVKNI…IELPSSKNTK (281 aa)) are cytoplasmic. Positions 256 to 472 (HLSHELKTPL…CFRIELPSSK (217 aa)) constitute a Histidine kinase domain. At histidine 259 the chain carries Phosphohistidine; by autocatalysis.

In terms of processing, autophosphorylated.

It localises to the cell inner membrane. It catalyses the reaction ATP + protein L-histidine = ADP + protein N-phospho-L-histidine.. Member of the two-component regulatory system QseF/QseE involved in the regulation of virulence and metabolism in EHEC. Required for pedestal formation in host epithelial cells during infection. Autophosphorylates in response to epinephrine, sulfate or phosphate and then probably transfers its phosphate group to QseF. In Escherichia coli O157:H7, this protein is Sensor histidine kinase QseE (qseE).